Reading from the N-terminus, the 302-residue chain is Heme A synthase (302 aa).

The Cytoplasmic portion of the chain corresponds to 1-8 (MFRKQNLK). Residues 9-29 (WLGVLATIIMTFVQLGGALVT) traverse the membrane as a helical segment. The Extracellular portion of the chain corresponds to 30–67 (KTGSEDGCGSSWPLCNGALLPENLPIQTIIELSHRAVS). Cysteine 37 and cysteine 44 are joined by a disulfide. Glutamate 60 is an active-site residue. Histidine 63 provides a ligand contact to heme o. Residues 68-88 (AISLIVVLWLVITAWKNIGYI) form a helical membrane-spanning segment. Topologically, residues 89 to 93 (KEIKP) are cytoplasmic. A helical membrane pass occupies residues 94–114 (LSIISVGFLLVQALVGAAAVI). At 115-125 (WQQNPYVLALH) the chain is on the extracellular side. Histidine 125 is a binding site for heme o. The chain crosses the membrane as a helical span at residues 126 to 146 (FGISLISFSSVFLMTLIIFSI). The Cytoplasmic portion of the chain corresponds to 147–161 (DKKYEADILFIHKPL). A helical transmembrane segment spans residues 162 to 182 (RILTWLMAIIVYLTIYTGALV). The Extracellular portion of the chain corresponds to 183–215 (RHTKSSLAYGAWPIPFDDIVPHNAHDWVQFSHR). Histidine 214 serves as a coordination point for heme b. The helical transmembrane segment at 216–236 (GMALITFIWIMITFIHAIKNY) threads the bilayer. The Cytoplasmic portion of the chain corresponds to 237-244 (SDNRTVRY). Residues 245 to 265 (GYTASFILVILQVITGALSVI) form a helical membrane-spanning segment. The Extracellular portion of the chain corresponds to 266-270 (TNVNL). The chain crosses the membrane as a helical span at residues 271-291 (IIALFHALFITYLFGMIAYFI). Residue histidine 276 participates in heme b binding. Topologically, residues 292–302 (LLMLRTTRSQK) are cytoplasmic.

The protein belongs to the COX15/CtaA family. Type 1 subfamily. In terms of assembly, interacts with CtaB. It depends on heme b as a cofactor.

The protein resides in the cell membrane. It carries out the reaction Fe(II)-heme o + 2 A + H2O = Fe(II)-heme a + 2 AH2. It functions in the pathway porphyrin-containing compound metabolism; heme A biosynthesis; heme A from heme O: step 1/1. Functionally, catalyzes the conversion of heme O to heme A by two successive hydroxylations of the methyl group at C8. The first hydroxylation forms heme I, the second hydroxylation results in an unstable dihydroxymethyl group, which spontaneously dehydrates, resulting in the formyl group of heme A. The chain is Heme A synthase from Staphylococcus epidermidis (strain ATCC 35984 / DSM 28319 / BCRC 17069 / CCUG 31568 / BM 3577 / RP62A).